We begin with the raw amino-acid sequence, 568 residues long: Urease subunit alpha (568 aa).

Positions 130-568 (GGIDTHIHFI…LPMAQRYFLF (439 aa)) constitute a Urease domain. H135, H137, and K218 together coordinate Ni(2+). Residue K218 is modified to N6-carboxylysine. H220 serves as a coordination point for substrate. Ni(2+)-binding residues include H247 and H273. The active-site Proton donor is H321. D361 is a binding site for Ni(2+).

This sequence belongs to the metallo-dependent hydrolases superfamily. Urease alpha subunit family. Heterotrimer of UreA (gamma), UreB (beta) and UreC (alpha) subunits. Three heterotrimers associate to form the active enzyme. Ni cation serves as cofactor. Carboxylation allows a single lysine to coordinate two nickel ions.

Its subcellular location is the cytoplasm. It carries out the reaction urea + 2 H2O + H(+) = hydrogencarbonate + 2 NH4(+). It functions in the pathway nitrogen metabolism; urea degradation; CO(2) and NH(3) from urea (urease route): step 1/1. The sequence is that of Urease subunit alpha from Burkholderia vietnamiensis (strain G4 / LMG 22486) (Burkholderia cepacia (strain R1808)).